The chain runs to 315 residues: Olfactory receptor 5M10 (315 aa).

At 1–25 (MLSPNHTIVTEFILLGLTDDPVLEK) the chain is on the extracellular side. N5 carries an N-linked (GlcNAc...) asparagine glycan. Residues 26-46 (ILFGVFLAIYLITLAGNLCMI) form a helical membrane-spanning segment. The Cytoplasmic portion of the chain corresponds to 47–54 (LLIRTNSQ). The chain crosses the membrane as a helical span at residues 55–75 (LQTPMYFFLGHLSFVDICYSS). The Extracellular portion of the chain corresponds to 76-99 (NVTPNMLHNFLSEQKTISYAGCFT). C97 and C189 are joined by a disulfide. The chain crosses the membrane as a helical span at residues 100–120 (QCLLFIALVITEFYFLASMAL). At 121–139 (DRYVAICSPLHYSSRMSKN) the chain is on the cytoplasmic side. The chain crosses the membrane as a helical span at residues 140–160 (ICISLVTVPYMYGFLNGLSQT). At 161–196 (LLTFHLSFCGSLEINHFYCADPPLIMLACSDTRVKK) the chain is on the extracellular side. The helical transmembrane segment at 197–217 (MAMFVVAGFTLSSSLFIILLS) threads the bilayer. At 218–237 (YLFIFAAIFRIRSAEGRHKA) the chain is on the cytoplasmic side. Residues 238-258 (FSTCASHLTIVTLFYGTLFCM) traverse the membrane as a helical segment. The Extracellular portion of the chain corresponds to 259–271 (YVRPPSEKSVEES). Residues 272–292 (KIIAVFYTFLSPMLNPLIYSL) traverse the membrane as a helical segment. Residues 293-315 (RNRDVILAIQQMIRGKSFCKIAV) lie on the Cytoplasmic side of the membrane.

This sequence belongs to the G-protein coupled receptor 1 family.

It is found in the cell membrane. In terms of biological role, odorant receptor. This Homo sapiens (Human) protein is Olfactory receptor 5M10 (OR5M10).